The sequence spans 802 residues: ATP-dependent zinc metalloprotease FTSH 3, mitochondrial (802 aa).

The transit peptide at 1–21 (MSLSSLSRALARSARSSRQRQ) directs the protein to the mitochondrion. Positions 1-23 (MSLSSLSRALARSARSSRQRQGS) are enriched in low complexity. 2 disordered regions span residues 1–33 (MSLS…GLRA) and 85–120 (DKSK…SGDQ). The span at 85-113 (DKSKKNHGKHSEEENKGKGDESDKSDSKK) shows a compositional bias: basic and acidic residues. A helical transmembrane segment spans residues 133–153 (MIAPLFLFGLLLLSASASSSE). 360–367 (GPPGTGKT) lines the ATP pocket. His585 provides a ligand contact to Zn(2+). Glu586 is a catalytic residue. Zn(2+)-binding residues include His589 and Asp661. The tract at residues 773–802 (KQGFQDEDSNRNAELSNADGASSLGEAVAS) is disordered.

The protein in the N-terminal section; belongs to the AAA ATPase family. It in the C-terminal section; belongs to the peptidase M41 family. Zn(2+) serves as cofactor.

The protein localises to the mitochondrion inner membrane. Its function is as follows. Probable ATP-dependent zinc metallopeptidase. This is ATP-dependent zinc metalloprotease FTSH 3, mitochondrial (FTSH3) from Oryza sativa subsp. japonica (Rice).